A 148-amino-acid polypeptide reads, in one-letter code: Lysozyme C (148 aa).

Residues 1–18 form the signal peptide; it reads MKVLILLGLVLLSVMVQG. Residues 19-148 form the C-type lysozyme domain; it reads KVFERCELAR…VSQYIQGCGV (130 aa). 4 disulfides stabilise this stretch: C24-C146, C48-C134, C83-C99, and C95-C113. Active-site residues include E53 and D71.

It belongs to the glycosyl hydrolase 22 family. In terms of assembly, monomer.

Its subcellular location is the secreted. It catalyses the reaction Hydrolysis of (1-&gt;4)-beta-linkages between N-acetylmuramic acid and N-acetyl-D-glucosamine residues in a peptidoglycan and between N-acetyl-D-glucosamine residues in chitodextrins.. In terms of biological role, lysozymes have primarily a bacteriolytic function; those in tissues and body fluids are associated with the monocyte-macrophage system and enhance the activity of immunoagents. This chain is Lysozyme C (LYZ), found in Saguinus oedipus (Cotton-top tamarin).